We begin with the raw amino-acid sequence, 347 residues long: NADH-ubiquinone oxidoreductase chain 2 (347 aa).

11 helical membrane-spanning segments follow: residues 1 to 21 (MNPLIFIMLILTIILGTSIIL), 25 to 45 (HWFMIWLGFEMNMMAMIPVLM), 59 to 79 (YFLTQATASMILMLALIINLM), 96 to 116 (LLITIALTMKLGLAPFHFWVP), 122 to 142 (VSLQAGLILLTWQKIAPLAVM), 145 to 165 (IFASINPNLLLTMALLSIMIG), 178 to 198 (IMAYSSIAHMGWMTAIMIYNP), 200 to 220 (LMLLNLLLYILMTTSMFMMFM), 242 to 262 (VLMMTTLLSLGGLPPLTGFMP), 274 to 294 (NSVILPTSMAILALINLFFYM), and 325 to 345 (LLAPLITLSTLILPLTPMFIL).

This sequence belongs to the complex I subunit 2 family. Core subunit of respiratory chain NADH dehydrogenase (Complex I) which is composed of 45 different subunits. Interacts with TMEM242.

The protein resides in the mitochondrion inner membrane. It catalyses the reaction a ubiquinone + NADH + 5 H(+)(in) = a ubiquinol + NAD(+) + 4 H(+)(out). Its function is as follows. Core subunit of the mitochondrial membrane respiratory chain NADH dehydrogenase (Complex I) which catalyzes electron transfer from NADH through the respiratory chain, using ubiquinone as an electron acceptor. Essential for the catalytic activity and assembly of complex I. The polypeptide is NADH-ubiquinone oxidoreductase chain 2 (Myosorex kihaulei (Kihaule's mouse shrew)).